The chain runs to 316 residues: MLP-like protein 34 (316 aa).

Belongs to the MLP family.

In Arabidopsis thaliana (Mouse-ear cress), this protein is MLP-like protein 34 (MLP34).